The following is a 126-amino-acid chain: Nascent polypeptide-associated complex protein (126 aa).

Residues 10–77 form the NAC-A/B domain; it reads PRMMKQMQKM…AKKVAKEEEK (68 aa).

This sequence belongs to the NAC-alpha family. As to quaternary structure, homodimer. Interacts with the ribosome. Binds ribosomal RNA.

Functionally, contacts the emerging nascent chain on the ribosome. This chain is Nascent polypeptide-associated complex protein, found in Methanococcus maripaludis (strain DSM 14266 / JCM 13030 / NBRC 101832 / S2 / LL).